The primary structure comprises 99 residues: Large ribosomal subunit protein uL23 (99 aa).

Belongs to the universal ribosomal protein uL23 family. As to quaternary structure, part of the 50S ribosomal subunit. Contacts protein L29, and trigger factor when it is bound to the ribosome.

One of the early assembly proteins it binds 23S rRNA. One of the proteins that surrounds the polypeptide exit tunnel on the outside of the ribosome. Forms the main docking site for trigger factor binding to the ribosome. This is Large ribosomal subunit protein uL23 from Rhodopseudomonas palustris (strain HaA2).